A 350-amino-acid chain; its full sequence is Putative D-xylulose reductase (350 aa).

Zn(2+)-binding residues include Cys-43, His-68, and Glu-154.

The protein belongs to the zinc-containing alcohol dehydrogenase family. The cofactor is Zn(2+).

The catalysed reaction is xylitol + NAD(+) = D-xylulose + NADH + H(+). In Agrobacterium fabrum (strain C58 / ATCC 33970) (Agrobacterium tumefaciens (strain C58)), this protein is Putative D-xylulose reductase.